Here is a 315-residue protein sequence, read N- to C-terminus: Ribosomal RNA small subunit methyltransferase H (315 aa).

S-adenosyl-L-methionine is bound by residues 33 to 35, aspartate 52, phenylalanine 84, aspartate 106, and glutamine 113; that span reads GGH. The interval 290–315 is disordered; the sequence is PITASTSELENNNRSHSAKLRVAEKL. A compositionally biased stretch (polar residues) spans 292–304; the sequence is TASTSELENNNRS.

It belongs to the methyltransferase superfamily. RsmH family.

It is found in the cytoplasm. It carries out the reaction cytidine(1402) in 16S rRNA + S-adenosyl-L-methionine = N(4)-methylcytidine(1402) in 16S rRNA + S-adenosyl-L-homocysteine + H(+). Functionally, specifically methylates the N4 position of cytidine in position 1402 (C1402) of 16S rRNA. In Lactobacillus helveticus (strain DPC 4571), this protein is Ribosomal RNA small subunit methyltransferase H.